The sequence spans 632 residues: Chaperone protein DnaK (632 aa).

T198 carries the phosphothreonine; by autocatalysis modification. The disordered stretch occupies residues 599–632 (YKKAGASQQGAGSTTQSKKEEDVIEAEVEDKDNK). Residues 604-614 (ASQQGAGSTTQ) are compositionally biased toward polar residues. Residues 620–632 (DVIEAEVEDKDNK) show a composition bias toward acidic residues.

This sequence belongs to the heat shock protein 70 family.

Its function is as follows. Acts as a chaperone. The polypeptide is Chaperone protein DnaK (Thermodesulfovibrio yellowstonii (strain ATCC 51303 / DSM 11347 / YP87)).